The sequence spans 99 residues: Aspartyl/glutamyl-tRNA(Asn/Gln) amidotransferase subunit C (99 aa).

Belongs to the GatC family. Heterotrimer of A, B and C subunits.

The catalysed reaction is L-glutamyl-tRNA(Gln) + L-glutamine + ATP + H2O = L-glutaminyl-tRNA(Gln) + L-glutamate + ADP + phosphate + H(+). It carries out the reaction L-aspartyl-tRNA(Asn) + L-glutamine + ATP + H2O = L-asparaginyl-tRNA(Asn) + L-glutamate + ADP + phosphate + 2 H(+). Functionally, allows the formation of correctly charged Asn-tRNA(Asn) or Gln-tRNA(Gln) through the transamidation of misacylated Asp-tRNA(Asn) or Glu-tRNA(Gln) in organisms which lack either or both of asparaginyl-tRNA or glutaminyl-tRNA synthetases. The reaction takes place in the presence of glutamine and ATP through an activated phospho-Asp-tRNA(Asn) or phospho-Glu-tRNA(Gln). This Paraburkholderia xenovorans (strain LB400) protein is Aspartyl/glutamyl-tRNA(Asn/Gln) amidotransferase subunit C.